The following is a 545-amino-acid chain: ATP synthase subunit alpha (545 aa).

173–180 (GDRQTGKT) contributes to the ATP binding site.

The protein belongs to the ATPase alpha/beta chains family. In terms of assembly, F-type ATPases have 2 components, CF(1) - the catalytic core - and CF(0) - the membrane proton channel. CF(1) has five subunits: alpha(3), beta(3), gamma(1), delta(1), epsilon(1). CF(0) has three main subunits: a(1), b(2) and c(9-12). The alpha and beta chains form an alternating ring which encloses part of the gamma chain. CF(1) is attached to CF(0) by a central stalk formed by the gamma and epsilon chains, while a peripheral stalk is formed by the delta and b chains.

The protein resides in the cell membrane. It catalyses the reaction ATP + H2O + 4 H(+)(in) = ADP + phosphate + 5 H(+)(out). Its function is as follows. Produces ATP from ADP in the presence of a proton gradient across the membrane. The alpha chain is a regulatory subunit. The polypeptide is ATP synthase subunit alpha (Clavibacter michiganensis subsp. michiganensis (strain NCPPB 382)).